We begin with the raw amino-acid sequence, 440 residues long: Tyrosine--tRNA ligase (440 aa).

Position 46 (Y46) interacts with L-tyrosine. A 'HIGH' region motif is present at residues 51 to 60 (PTAASLHIGN). Positions 181 and 185 each coordinate L-tyrosine. Residues 241–245 (KFGKS) carry the 'KMSKS' region motif. K244 contributes to the ATP binding site. One can recognise an S4 RNA-binding domain in the interval 373–439 (DRVIDAAQAA…GKKALGAVEN (67 aa)).

It belongs to the class-I aminoacyl-tRNA synthetase family. TyrS type 1 subfamily. Homodimer.

It is found in the cytoplasm. It catalyses the reaction tRNA(Tyr) + L-tyrosine + ATP = L-tyrosyl-tRNA(Tyr) + AMP + diphosphate + H(+). Its function is as follows. Catalyzes the attachment of tyrosine to tRNA(Tyr) in a two-step reaction: tyrosine is first activated by ATP to form Tyr-AMP and then transferred to the acceptor end of tRNA(Tyr). This chain is Tyrosine--tRNA ligase, found in Bifidobacterium longum (strain NCC 2705).